The following is a 909-amino-acid chain: UPF0182 protein Moth_1139 (909 aa).

The next 7 membrane-spanning stretches (helical) occupy residues 8–28, 51–71, 103–123, 165–185, 201–221, 245–265, and 277–297; these read FCLLIIIPGFLVAAYLGSHFL, VGIRLGTIAFFFLFFYLNLLF, LGILYLLLSLAGALIFSPLAA, LLITAVVGAVLVTGFFYFIFN, LVHFSTLVALLFLIQAWGFRL, LLPGYNILGWVAVACGLIIVL, and AGILSFMAAYFLLVIAVPLAV. The interval 843 to 862 is disordered; the sequence is PAPAASPQPPSQAATGSPGN.

This sequence belongs to the UPF0182 family.

It is found in the cell membrane. The chain is UPF0182 protein Moth_1139 from Moorella thermoacetica (strain ATCC 39073 / JCM 9320).